The sequence spans 140 residues: Transcription antitermination protein NusB (140 aa).

The protein belongs to the NusB family.

In terms of biological role, involved in transcription antitermination. Required for transcription of ribosomal RNA (rRNA) genes. Binds specifically to the boxA antiterminator sequence of the ribosomal RNA (rrn) operons. This chain is Transcription antitermination protein NusB, found in Streptococcus pneumoniae (strain 70585).